A 165-amino-acid chain; its full sequence is GTPase activating protein 1 (165 aa).

The 105-residue stretch at 1 to 105 (MLGHLVGLVK…VVKMKIEGVA (105 aa)) folds into the C2 domain. Residues Arg22, Asp23, Asp28, Asp74, Lys75, Asp76, and Asp81 each coordinate Ca(2+).

It belongs to the plant CAR protein family. In terms of assembly, binds to PYR/PYL/RCAR abscisic acid intracellular receptors in an ABA-independent manner, both at the plasma membrane and in the nucleus. Binds phospholipids in a Ca(2+)-dependent manner. Interacts with YchF1.

The protein resides in the cell membrane. It localises to the nucleus. It is found in the cytoplasm. Its subcellular location is the cytosol. Functionally, mediates the transient calcium-dependent interaction of PYR/PYL/RCAR abscisic acid (ABA) receptors with the plasma membrane and thus regulates ABA sensitivity. Stimulates the GTPase/ATPase activities of YchF1, and regulates its subcellular localization. Promotes tolerance towards salinity stress by limiting the accumulation of reactive oxygen species (ROS). Promotes resistance to bacterial pathogens. This chain is GTPase activating protein 1, found in Oryza sativa subsp. indica (Rice).